A 473-amino-acid polypeptide reads, in one-letter code: MWGLAGGRLFGIFSAPVLVAVVCCAQSVNDPGNMSFVKETVDKLLKGYDIRLRPDFGGPPVCVGMNIDIASIDMVSEVNMDYTLTMYFQQYWRDKRLAYSGIPLNLTLDNRVADQLWVPDTYFLNDKKSFVHGVTVKNRMIRLHPDGTVLYGLRITTTAACMMDLRRYPLDEQNCTLEIESYGYTTDDIEFYWRGGDKAVTGVERIELPQFSIVEHRLVSRNVVFATGAYPRLSLSFRLKRNIGYFILQTYMPSILITILSWVSFWINYDASAARVALGITTVLTMTTINTHLRETLPKIPYVKAIDMYLMGCFVFVFLALLEYAFVNYIFFGRGPQRQKKLAEKTAKAKNDRSKSESNRVDAHGNILLTSLEVHNEMNEVSGGIGDTRNSAISFDNSGIQYRKQSMPREGHGRFLGDRSLPHKKTHLRRRSSQLKIKIPDLTDVNAIDRWSRIVFPFTFSLFNLVYWLYYVN.

The N-terminal stretch at 1-25 (MWGLAGGRLFGIFSAPVLVAVVCCA) is a signal peptide. Over 26-246 (QSVNDPGNMS…FRLKRNIGYF (221 aa)) the chain is Extracellular. 2 N-linked (GlcNAc...) asparagine glycosylation sites follow: Asn33 and Asn105. 120–122 (DTY) is a benzamidine binding site. Tyr122 lines the 4-aminobutanoate pocket. Tyr122 contributes to the histamine binding site. The cysteines at positions 161 and 175 are disulfide-linked. Asn174 carries N-linked (GlcNAc...) asparagine glycosylation. 4-aminobutanoate-binding residues include Glu180 and Tyr182. Benzamidine is bound by residues 180-182 (ESY) and Phe225. 181 to 182 (SY) contributes to the histamine binding site. Thr227 is a 4-aminobutanoate binding site. Thr227 lines the histamine pocket. Residues 247–267 (ILQTYMPSILITILSWVSFWI) form a helical membrane-spanning segment. At 268–271 (NYDA) the chain is on the cytoplasmic side. A helical transmembrane segment spans residues 272-292 (SAARVALGITTVLTMTTINTH). Over 293–304 (LRETLPKIPYVK) the chain is Extracellular. Residues 305-328 (AIDMYLMGCFVFVFLALLEYAFVN) form a helical membrane-spanning segment. The Cytoplasmic portion of the chain corresponds to 329-447 (YIFFGRGPQR…KIPDLTDVNA (119 aa)). A helical membrane pass occupies residues 448–470 (IDRWSRIVFPFTFSLFNLVYWLY). Residues 471–473 (YVN) are Extracellular-facing.

It belongs to the ligand-gated ion channel (TC 1.A.9) family. Gamma-aminobutyric acid receptor (TC 1.A.9.5) subfamily. GABRB3 sub-subfamily. Heteropentamer, formed by a combination of alpha (GABRA1-6), beta (GABRB1-3), gamma (GABRG1-3), delta (GABRD), epsilon (GABRE), rho (GABRR1-3), pi (GABRP) and theta (GABRQ) chains, each subunit exhibiting distinct physiological and pharmacological properties. Can form functional homopentamers (in vitro). Interacts with UBQLN1. May interact with KIF21B. Identified in a complex of 720 kDa composed of LHFPL4, NLGN2, GABRA1, GABRB2, GABRG2 and GABRB3. Interacts with LHFPL4. Interacts with GIT1; this interaction is required for synaptic GABRB3 surface stability and inhibitory synapse strength.

It is found in the postsynaptic cell membrane. Its subcellular location is the cell membrane. The protein resides in the cytoplasmic vesicle membrane. It catalyses the reaction chloride(in) = chloride(out). With respect to regulation, potentiated by histamine. In terms of biological role, beta subunit of the heteropentameric ligand-gated chloride channel gated by gamma-aminobutyric acid (GABA), a major inhibitory neurotransmitter in the brain. GABA-gated chloride channels, also named GABA(A) receptors (GABAAR), consist of five subunits arranged around a central pore and contain GABA active binding site(s) located at the alpha and beta subunit interface(s). GABAARs containing beta-3/GABRB3 subunit are found at both synaptic and extrasynaptic sites. When activated by GABA, GABAARs selectively allow the flow of chloride anions across the cell membrane down their electrochemical gradient. Chloride influx into the postsynaptic neuron following GABAAR opening decreases the neuron ability to generate a new action potential, thereby reducing nerve transmission. GABAARs containing alpha-1 and beta-3 subunits exhibit synaptogenic activity; the gamma-2 subunit being necessary but not sufficient to induce rapid synaptic contacts formation. Extrasynaptic beta-3 receptors contribute to the tonic GABAergic inhibition. GABAARs containing alpha-1, beta-3 and epsilon subunits may also permit spontaneous chloride channel activity while preserving the structural information required for GABA-gated openings. Beta-containing GABAARs can simultaneously bind GABA and histamine where histamine binds at the interface of two neighboring beta subunits, which may be involved in the regulation of sleep and wakefulness. Plays an important role in somatosensation and in the production of antinociception. The sequence is that of Gamma-aminobutyric acid receptor subunit beta-3 from Homo sapiens (Human).